The following is a 342-amino-acid chain: Probable deoxyhypusine synthase (342 aa).

Catalysis depends on Lys-307, which acts as the Nucleophile.

Belongs to the deoxyhypusine synthase family. Requires NAD(+) as cofactor.

It carries out the reaction [eIF5A protein]-L-lysine + spermidine = [eIF5A protein]-deoxyhypusine + propane-1,3-diamine. Its pathway is protein modification; eIF5A hypusination. Functionally, catalyzes the NAD-dependent oxidative cleavage of spermidine and the subsequent transfer of the butylamine moiety of spermidine to the epsilon-amino group of a specific lysine residue of the eIF-5A precursor protein to form the intermediate deoxyhypusine residue. The sequence is that of Probable deoxyhypusine synthase (dys) from Pyrococcus horikoshii (strain ATCC 700860 / DSM 12428 / JCM 9974 / NBRC 100139 / OT-3).